We begin with the raw amino-acid sequence, 355 residues long: uncharacterized protein (355 aa).

The helical transmembrane segment at 6–26 threads the bilayer; sequence LLTPYFLLSILSVGVFTATAA.

Belongs to the SUN family.

It localises to the membrane. This is an uncharacterized protein from Saccharomyces cerevisiae (strain ATCC 204508 / S288c) (Baker's yeast).